The sequence spans 167 residues: CDP-archaeol synthase (167 aa).

Helical transmembrane passes span 4-24, 51-71, 80-100, 104-124, and 139-158; these read ILEAFWYILPAYFANSSPVIL, GFLGGLTVGTLIGVIQQIIYP, FKVSFLLALGALVGDLIGSFI, LNLPPGYPAVGLDQWGFLISA, and VLLLLVVTPLIHWGTNVLAY.

This sequence belongs to the CDP-archaeol synthase family. Mg(2+) serves as cofactor.

It localises to the cell membrane. It catalyses the reaction 2,3-bis-O-(geranylgeranyl)-sn-glycerol 1-phosphate + CTP + H(+) = CDP-2,3-bis-O-(geranylgeranyl)-sn-glycerol + diphosphate. The protein operates within membrane lipid metabolism; glycerophospholipid metabolism. Functionally, catalyzes the formation of CDP-2,3-bis-(O-geranylgeranyl)-sn-glycerol (CDP-archaeol) from 2,3-bis-(O-geranylgeranyl)-sn-glycerol 1-phosphate (DGGGP) and CTP. This reaction is the third ether-bond-formation step in the biosynthesis of archaeal membrane lipids. The sequence is that of CDP-archaeol synthase from Pyrococcus furiosus (strain ATCC 43587 / DSM 3638 / JCM 8422 / Vc1).